The sequence spans 421 residues: Protein MucB (421 aa).

In terms of domain architecture, UmuC spans 2–187 (FALIDVNGMY…LPVAEVWGVG (186 aa)).

Belongs to the DNA polymerase type-Y family.

Functionally, involved in UV protection and mutation. The sequence is that of Protein MucB (mucB) from Salmonella typhimurium.